A 346-amino-acid chain; its full sequence is MESTLGAGIAMAEALQNQLPWLENVWLWVTFLGDPKSLFLFYFPAAYYASRRVGIAVLWISLITEWLNLVFKWFLFGDRPFWWVHESGYYSQAPAQVHQFPSSCETGPGSPSGHCMITGAALWPIMTAVSSQMATRAHSRWVRVIPSLAYCTFLLAVGLSRVFLLAHFPHQVLAGLITGAVLGWLMTPQVPMERELSFYGLTSLALLLGASLIYWTLFTLGLDLSWSINLASKWCERPEWVHLDSRPFASLSRDSGAALGLGIALHSPCYAQVRRAHLGYGQKLVCLVLAMGLLGPLNWLGYPPQISLFYIFNFLKYTLWPCLVLALVPWLVHMFSAQEAPPIRSS.

Residues 1 to 24 are Lumenal-facing; it reads MESTLGAGIAMAEALQNQLPWLEN. The helical transmembrane segment at 25-45 threads the bilayer; the sequence is VWLWVTFLGDPKSLFLFYFPA. The Cytoplasmic segment spans residues 46 to 54; sequence AYYASRRVG. Residues 55–75 form a helical membrane-spanning segment; it reads IAVLWISLITEWLNLVFKWFL. Residues 76–108 are Lumenal-facing; it reads FGDRPFWWVHESGYYSQAPAQVHQFPSSCETGP. Position 79 (R79) interacts with substrate. A helical transmembrane segment spans residues 109–129; sequence GSPSGHCMITGAALWPIMTAV. H114 functions as the Proton donor in the catalytic mechanism. Topologically, residues 130 to 140 are cytoplasmic; the sequence is SSQMATRAHSR. A helical membrane pass occupies residues 141–162; it reads WVRVIPSLAYCTFLLAVGLSRV. R161 serves as a coordination point for substrate. Over 163 to 167 the chain is Lumenal; the sequence is FLLAH. Residue H167 is the Nucleophile of the active site. Residues 168 to 186 form a helical membrane-spanning segment; it reads FPHQVLAGLITGAVLGWLM. The Cytoplasmic portion of the chain corresponds to 187 to 197; the sequence is TPQVPMERELS. Residues 198–218 traverse the membrane as a helical segment; sequence FYGLTSLALLLGASLIYWTLF. The Lumenal portion of the chain corresponds to 219 to 254; that stretch reads TLGLDLSWSINLASKWCERPEWVHLDSRPFASLSRD. Residues 255–273 form a helical membrane-spanning segment; it reads SGAALGLGIALHSPCYAQV. Residues 274 to 283 lie on the Cytoplasmic side of the membrane; it reads RRAHLGYGQK. Residues 284–304 form a helical membrane-spanning segment; it reads LVCLVLAMGLLGPLNWLGYPP. The Lumenal segment spans residues 305 to 307; that stretch reads QIS. Residues 308-328 form a helical membrane-spanning segment; sequence LFYIFNFLKYTLWPCLVLALV. Topologically, residues 329 to 346 are cytoplasmic; the sequence is PWLVHMFSAQEAPPIRSS.

The protein belongs to the glucose-6-phosphatase family.

The protein localises to the endoplasmic reticulum membrane. The enzyme catalyses D-glucose 6-phosphate + H2O = D-glucose + phosphate. It functions in the pathway carbohydrate biosynthesis; gluconeogenesis. Its activity is regulated as follows. Inhibited by vanadate. Its function is as follows. Hydrolyzes glucose-6-phosphate to glucose in the endoplasmic reticulum. May form with the glucose-6-phosphate transporter (SLC37A4/G6PT) a ubiquitously expressed complex responsible for glucose production through glycogenolysis and gluconeogenesis. Probably required for normal neutrophil function. This is Glucose-6-phosphatase 3 (G6PC3) from Bos taurus (Bovine).